Consider the following 880-residue polypeptide: MNKLIYYFGNNGSDGNASMNNILGNKGAGLAEMSNLKLPIPNGFTITTELCNYFYKHNNNFPKNFQNELQQAISKLEVTTGKIFGSTTSNPLLLSVRSGSTVSMPGMMDTILNLGMNNEVCNALADACGNKLFALDSYRRFLEMYGSTVLSIPSDLFEQIYENHKIQADIYKDSDITVELLEKIIDDFKRLHIKYDKQLINDPYEQLESAIKAVLYSWKNNRAIIYRKLNNISEDFGTAINIQEMVFGNLGKTSATGVAFTRSPSTGEKKLFGEFLINAQGEDIVSGTRTPMPIIANDSNSMQAMMPEVFKELSQIAKKLEEHYLDMQDIEFTIENNKLYILQTRTAKRTAIAAINIAVQMVKEKLISKEQALMRIDPESLNQLLHTRIDYSKGLTSIAEGLPASPGAATGIVVFSPYDAEKLSHHHKVILVRHDTSPEDINGMHVSSGILTIRGGMTSHAAVVARGMGKPCVCGTNNLSIDEQKQILIAGDIVIKQGDIITIDGGSGKIFLGEMPLIQPTFSEESKLILDWADEISSLKVRANAETVNDALVSIKFGAQGIGLCRSEHMFFDKNKIPLVREMIIAPDIERRQCALQKLLPLQTEDFKSLFRVMKNKPVNIRLLDPPLHEFLPTTEEDKKNLANSLNLPLSMIHQRLHAMHEVNPMLGHRGCRLGICLPEIYQMQIEAIFTAIFELHKKEHIESNLELMIPLISNVAEIKKLKMYIYEVVQELEQRYSYKFSFTLGTMIELPRAALESKKIAKEVDYFSFGTNDLTQTTYGISRDDIASFLPYYLEEKIFESDPFTTLDEEGVGELIEIAIKRGKSSNANLKLGACGEHAGNPTSIAFFHKANLNYVSCSPYRIPIARIAAAQAKIKQGS.

The N-terminal stretch occupies residues 1-348 (MNKLIYYFGN…LYILQTRTAK (348 aa)). An ATP-binding site is contributed by Arg97. The linker 1 stretch occupies residues 349-405 (RTAIAAINIAVQMVKEKLISKEQALMRIDPESLNQLLHTRIDYSKGLTSIAEGLPAS). The segment at 406–503 (PGAATGIVVF…VIKQGDIITI (98 aa)) is central. At Thr458 the chain carries Phosphothreonine; by PDRP1. His460 acts as the Tele-phosphohistidine intermediate in catalysis. Positions 504–538 (DGGSGKIFLGEMPLIQPTFSEESKLILDWADEISS) are linker 2. The tract at residues 539-880 (LKVRANAETV…AAQAKIKQGS (342 aa)) is C-terminal. Substrate-binding residues include Arg566, Arg622, Glu750, Gly771, Thr772, Asn773, and Asp774. Residue Glu750 participates in Mg(2+) binding. Mg(2+) is bound at residue Asp774. Cys836 (proton donor) is an active-site residue.

The protein belongs to the PEP-utilizing enzyme family. In terms of assembly, homodimer. Mg(2+) serves as cofactor. In terms of processing, phosphorylation of Thr-458 in the dark inactivates the enzyme. Dephosphorylation upon light stimulation reactivates the enzyme.

It carries out the reaction pyruvate + phosphate + ATP = phosphoenolpyruvate + AMP + diphosphate + H(+). Activated by light-induced dephosphorylation. Inhibited by dark-induced phosphorylation. Both reactions are catalyzed by PDRP1. Functionally, catalyzes the reversible phosphorylation of pyruvate and phosphate. This chain is Pyruvate, phosphate dikinase (ppdK), found in Rickettsia prowazekii (strain Madrid E).